We begin with the raw amino-acid sequence, 62 residues long: Protein DsrB (62 aa).

It belongs to the DsrB family.

This Enterobacter sp. (strain 638) protein is Protein DsrB.